The sequence spans 331 residues: Putative lipoprotein YerB (331 aa).

Positions 1–19 are cleaved as a signal peptide; it reads MKKWMTVCALCFVFFLLVS. Residue C20 is the site of N-palmitoyl cysteine attachment. Residue C20 is the site of S-diacylglycerol cysteine attachment. T97 is modified (phosphothreonine). S103 carries the post-translational modification Phosphoserine.

In terms of assembly, interacts with PcrA. The interaction is not essential for cell viability or repair of UV-induced lesions.

Its subcellular location is the cell membrane. This is Putative lipoprotein YerB (yerB) from Bacillus subtilis (strain 168).